A 372-amino-acid chain; its full sequence is Probable leucine aminopeptidase MCYG_03459 (372 aa).

An N-terminal signal peptide occupies residues 1–18 (MKISTLAVVSAFAVTAIA). An N-linked (GlcNAc...) asparagine glycan is attached at asparagine 95. Histidine 175 and aspartate 194 together coordinate Zn(2+). N-linked (GlcNAc...) asparagine glycosylation is found at asparagine 195 and asparagine 219. Zn(2+) is bound by residues glutamate 233 and aspartate 260. An intrachain disulfide couples cysteine 305 to cysteine 309. Histidine 338 contacts Zn(2+).

This sequence belongs to the peptidase M28 family. M28E subfamily. In terms of assembly, monomer. Zn(2+) is required as a cofactor.

It is found in the secreted. In terms of biological role, probable extracellular aminopeptidase which contributes to pathogenicity. This Arthroderma otae (strain ATCC MYA-4605 / CBS 113480) (Microsporum canis) protein is Probable leucine aminopeptidase MCYG_03459.